The primary structure comprises 228 residues: PKHD-type hydroxylase YbiX (228 aa).

A Fe2OG dioxygenase domain is found at 78-177 (TLSTPLFNRY…RVASFIWIQS (100 aa)). Fe cation contacts are provided by H96, D98, and H158. Residue R168 participates in 2-oxoglutarate binding.

It depends on Fe(2+) as a cofactor. L-ascorbate is required as a cofactor.

In Escherichia coli O157:H7, this protein is PKHD-type hydroxylase YbiX.